A 503-amino-acid chain; its full sequence is Transcription termination/antitermination protein NusA (503 aa).

An S1 motif domain is found at 140-206 (GELVIGVVKR…RGPQLLVSRT (67 aa)). In terms of domain architecture, KH spans 308 to 374 (SHTMDIAVNK…FMEKLDVDEE (67 aa)).

Belongs to the NusA family. Monomer. Binds directly to the core enzyme of the DNA-dependent RNA polymerase and to nascent RNA.

It localises to the cytoplasm. Functionally, participates in both transcription termination and antitermination. The polypeptide is Transcription termination/antitermination protein NusA (Coxiella burnetii (strain RSA 493 / Nine Mile phase I)).